The chain runs to 251 residues: Ubiquinone/menaquinone biosynthesis C-methyltransferase UbiE (251 aa).

S-adenosyl-L-methionine is bound by residues T74, D95, and 123-124; that span reads NA.

It belongs to the class I-like SAM-binding methyltransferase superfamily. MenG/UbiE family.

It carries out the reaction a 2-demethylmenaquinol + S-adenosyl-L-methionine = a menaquinol + S-adenosyl-L-homocysteine + H(+). The catalysed reaction is a 2-methoxy-6-(all-trans-polyprenyl)benzene-1,4-diol + S-adenosyl-L-methionine = a 5-methoxy-2-methyl-3-(all-trans-polyprenyl)benzene-1,4-diol + S-adenosyl-L-homocysteine + H(+). It participates in quinol/quinone metabolism; menaquinone biosynthesis; menaquinol from 1,4-dihydroxy-2-naphthoate: step 2/2. Its pathway is cofactor biosynthesis; ubiquinone biosynthesis. In terms of biological role, methyltransferase required for the conversion of demethylmenaquinol (DMKH2) to menaquinol (MKH2) and the conversion of 2-polyprenyl-6-methoxy-1,4-benzoquinol (DDMQH2) to 2-polyprenyl-3-methyl-6-methoxy-1,4-benzoquinol (DMQH2). This is Ubiquinone/menaquinone biosynthesis C-methyltransferase UbiE from Erwinia tasmaniensis (strain DSM 17950 / CFBP 7177 / CIP 109463 / NCPPB 4357 / Et1/99).